The sequence spans 942 residues: Protein NLP1 (942 aa).

Residues 1-11 are compositionally biased toward pro residues; it reads MEQKPSPPPPP. Disordered stretches follow at residues 1-32, 77-106, 594-620, 723-753, and 759-778; these read MEQK…GDIA, TTPA…VSPA, VKEN…TKTE, FQLE…PSCS, and SLGC…APQL. A compositionally biased stretch (gly residues) spans 21–32; it reads MGCGMGGTGDIA. Over residues 597 to 609 the composition is skewed to polar residues; sequence NTCSSDPSNSNSD. One can recognise an RWP-RK domain in the interval 609–690; sequence DKAVEKRRTK…IDSVHGPEGT (82 aa). A compositionally biased stretch (low complexity) spans 743–753; sequence SGSNSISPSCS. Over residues 765–774 the composition is skewed to polar residues; the sequence is VPKTQQQHGS. The 84-residue stretch at 844–927 folds into the PB1 domain; it reads SLKIKAIYGE…QTVRILVNPS (84 aa).

The protein localises to the nucleus. Its function is as follows. Probable transcription factor. The protein is Protein NLP1 (NLP1) of Oryza sativa subsp. japonica (Rice).